The sequence spans 528 residues: UDP-glucuronosyltransferase 2B10 (528 aa).

Positions 1 to 23 (MALKWTTVLLIQLSFYFSSGSCG) are cleaved as a signal peptide. N-linked (GlcNAc...) asparagine glycosylation is present at asparagine 66. Lysine 134 carries the post-translational modification N6-succinyllysine. Asparagine 314 and asparagine 481 each carry an N-linked (GlcNAc...) asparagine glycan. Residues 492–512 (VIGFLLACVATVLFIITKCCL) form a helical membrane-spanning segment.

This sequence belongs to the UDP-glycosyltransferase family.

Its subcellular location is the microsome membrane. The protein localises to the endoplasmic reticulum membrane. It catalyses the reaction glucuronate acceptor + UDP-alpha-D-glucuronate = acceptor beta-D-glucuronoside + UDP + H(+). Its function is as follows. UDPGT is of major importance in the conjugation and subsequent elimination of potentially toxic xenobiotics and endogenous compounds. The chain is UDP-glucuronosyltransferase 2B10 (UGT2B10) from Homo sapiens (Human).